The sequence spans 433 residues: Adenylosuccinate synthetase (433 aa).

Residues 11-17 (GDEGKGK) and 39-41 (GHT) each bind GTP. Catalysis depends on Asp-12, which acts as the Proton acceptor. Mg(2+)-binding residues include Asp-12 and Gly-39. Residues 12–15 (DEGK), 37–40 (NAGH), Thr-134, Arg-148, Asn-230, Thr-245, and Arg-309 each bind IMP. Residue His-40 is the Proton donor of the active site. Residue 305–311 (VTTGRKR) coordinates substrate. GTP-binding positions include Arg-311, 337 to 339 (KLD), and 419 to 421 (GTG).

This sequence belongs to the adenylosuccinate synthetase family. As to quaternary structure, homodimer. Requires Mg(2+) as cofactor.

It is found in the cytoplasm. It carries out the reaction IMP + L-aspartate + GTP = N(6)-(1,2-dicarboxyethyl)-AMP + GDP + phosphate + 2 H(+). The protein operates within purine metabolism; AMP biosynthesis via de novo pathway; AMP from IMP: step 1/2. In terms of biological role, plays an important role in the de novo pathway and in the salvage pathway of purine nucleotide biosynthesis. Catalyzes the first committed step in the biosynthesis of AMP from IMP. The polypeptide is Adenylosuccinate synthetase (Saccharomyces cerevisiae (strain AWRI1631) (Baker's yeast)).